Consider the following 282-residue polypeptide: N-methyltransferase gliN (282 aa).

It belongs to the methyltransferase superfamily. LaeA methyltransferase family.

Its pathway is mycotoxin biosynthesis. Functionally, N-methyltransferase; part of the gene cluster that mediates the biosynthesis of gliotoxin, a member of the epipolythiodioxopiperazine (ETP) class of toxins characterized by a disulfide bridged cyclic dipeptide. The first step in gliotoxin biosynthesis is the condensation of serine and phenylalanine to form the cyclo-L-phenylalanyl-L-serine diketopiperazine (DKP) by the NRPS gliP. GliP is also able to produce the DKP cyclo-L-tryptophanyl-L-serine, suggesting that the substrate specificity of the first adenylation (A) domain in gliP is sufficiently relaxed to accommodate both L-Phe and L-Trp. The cytochrome P450 monooxygenase gliC has been shown to catalyze the subsequent hydroxylation of the alpha-carbon of L-Phe in cyclo-L-phenylalanyl-L-serine whereas the second cytochrome P450 enzyme, gliF, is presumably involved in the modification of the DKP side chain. The glutathione S-transferase (GST) gliG then forms a bis-glutathionylated biosynthetic intermediate which is responsible for the sulfurization of gliotoxin. This bis-glutathionylated intermediate is subsequently processed by the gamma-glutamyl cyclotransferase gliK to remove both gamma-glutamyl moieties. Subsequent processing via gliI yields a biosynthetic intermediate, which is N-methylated via the N-methyltransferase gliN, before the gliotoxin oxidoreductase gliT-mediated disulfide bridge closure. GliN-mediated amide methylation confers stability to ETP, damping the spontaneous formation of tri- and tetrasulfides. Intracellular dithiol gliotoxin oxidized by gliT is subsequently effluxed by gliA. Gliotoxin contributes to pathogenesis during invasive aspergillosis. In macrophages and neutrophils, gliotoxin showed inhibition of various different cell functions including cytokine production, antigen presentation, phagocytosis, and production of reactive oxygen species. This is N-methyltransferase gliN from Aspergillus fumigatus (strain ATCC MYA-4609 / CBS 101355 / FGSC A1100 / Af293) (Neosartorya fumigata).